A 635-amino-acid polypeptide reads, in one-letter code: Signal recognition particle subunit SRP72 (635 aa).

TPR repeat units follow at residues 7 to 42, 75 to 105, 106 to 139, 171 to 204, 220 to 253, 255 to 290, and 436 to 469; these read GGLYQCLTDISRADTSGDYQKALTSANKLIRKYPKE, GHVGFEKAYIHYRQDELDEAIKELNTCDKDD, VKALELKAQVFYKQENYQQAYDIYLYLLKNHSDD, YSQLYNRACVEIEAEKLPQALESLEKALKTCRKS, DSIRVQKAYVLQRMGQKAEALAIYEKVQAANHPD, SVKATITNNIPAASSDFALPESRKRFKAALQIDQTK, and VEVEQQRGNETAATKHLEKLVEKFPEDLQLQCRL. The tract at residues 539–635 is disordered; that stretch reads KRKRKIRLPK…QKKKKNASKF (97 aa). The segment covering 557–569 has biased composition (basic and acidic residues); sequence DPERWLPRQERST. Residues 625–635 show a composition bias toward basic residues; it reads KQKKKKNASKF.

It belongs to the SRP72 family. As to quaternary structure, heterodimer with srpa-68. Srpa-68-srpa-72 heterodimer formation is stabilized by the presence of 7SL RNA. Component of a signal recognition particle (SRP) complex that consists of a 7SL RNA molecule of 300 nucleotides and six protein subunits: srpa-72, srpa-68, SRP54, F37F2.2/SRP19, F25G6.8/SRP14 and ZK512.4/SRP9. Within the SRP complex, interacts (via N-terminus) with srpa-68 (via C-terminus).

Its subcellular location is the cytoplasm. The protein localises to the endoplasmic reticulum. Functionally, component of the signal recognition particle (SRP) complex, a ribonucleoprotein complex that mediates the cotranslational targeting of secretory and membrane proteins to the endoplasmic reticulum (ER). The SRP complex interacts with the signal sequence in nascent secretory and membrane proteins and directs them to the membrane of the ER. The SRP complex targets the ribosome-nascent chain complex to the SRP receptor (SR), which is anchored in the ER, where SR compaction and GTPase rearrangement drive cotranslational protein translocation into the ER. Binds the signal recognition particle RNA (7SL RNA) in presence of srpa-68. Can bind 7SL RNA with low affinity. The SRP complex possibly participates in the elongation arrest function. The chain is Signal recognition particle subunit SRP72 from Caenorhabditis elegans.